The following is a 289-amino-acid chain: MASSTFFSDWNQMLKPRVTSLVLATIIPGLYLASEQSPSGFLIAITLFGTFLMSSASFIFNQVIEKDRDAKMKRTSNRPIPSGRISVVQATLVGIAMMGSSFYVLAVYVNLLTALCAFAALISYVFLYTIFLKPRTTQNIVIGGVAGCVGPLIGYAAIGNSLPVQAWSLFMMIFLWTPAHFWALAIFLKEEYSDADFPMLPVVKGIHQTTKSIFFYTILYSIACVSFYFLESSMGFLYLIVSLIVCIWMGILSYQLIQNPEPQSARKFFFFSILHLFIINITIVVDHLI.

Helical transmembrane passes span 18 to 38 (VTSL…EQSP), 40 to 60 (GFLI…SFIF), 87 to 107 (VVQA…VLAV), 111 to 131 (LLTA…YTIF), 139 to 159 (NIVI…AAIG), 168 to 188 (SLFM…AIFL), 212 to 232 (SIFF…FLES), 234 to 254 (MGFL…ILSY), and 269 to 289 (FFFS…DHLI).

Belongs to the UbiA prenyltransferase family. Protoheme IX farnesyltransferase subfamily.

Its subcellular location is the cell inner membrane. The catalysed reaction is heme b + (2E,6E)-farnesyl diphosphate + H2O = Fe(II)-heme o + diphosphate. It functions in the pathway porphyrin-containing compound metabolism; heme O biosynthesis; heme O from protoheme: step 1/1. In terms of biological role, converts heme B (protoheme IX) to heme O by substitution of the vinyl group on carbon 2 of heme B porphyrin ring with a hydroxyethyl farnesyl side group. In Leptospira interrogans serogroup Icterohaemorrhagiae serovar copenhageni (strain Fiocruz L1-130), this protein is Protoheme IX farnesyltransferase.